We begin with the raw amino-acid sequence, 214 residues long: tRNA (guanine-N(7)-)-methyltransferase (214 aa).

S-adenosyl-L-methionine-binding residues include E43, E68, D95, and D117. The active site involves D117. Substrate-binding positions include K121, D153, and T190–E193.

Belongs to the class I-like SAM-binding methyltransferase superfamily. TrmB family.

It carries out the reaction guanosine(46) in tRNA + S-adenosyl-L-methionine = N(7)-methylguanosine(46) in tRNA + S-adenosyl-L-homocysteine. The protein operates within tRNA modification; N(7)-methylguanine-tRNA biosynthesis. In terms of biological role, catalyzes the formation of N(7)-methylguanine at position 46 (m7G46) in tRNA. This Staphylococcus aureus (strain JH1) protein is tRNA (guanine-N(7)-)-methyltransferase.